The sequence spans 1003 residues: SWI/SNF-related matrix-associated actin-dependent regulator of chromatin subfamily A containing DEAD/H box 1 (1003 aa).

Disordered regions lie at residues 15 to 130 (KKID…SKYK), 172 to 235 (GSSR…HFPD), and 274 to 351 (AKKE…EDYS). Composition is skewed to basic and acidic residues over residues 172–188 (GSSRKRKLDEVPKDSSP), 221–235 (KQEASVKKLQRHFPD), and 274–294 (AKKEVSNGKEFSRSNKNDNKS). The region spanning 221–264 (KQEASVKKLQRHFPDLDKEELREVLQEHDWSFHEALEALKLFAE) is the CUE domain. Low complexity predominate over residues 295-311 (SAKAKANQNSNKAMAQN). The segment covering 321–333 (KYSENAKRDTRDL) has biased composition (basic and acidic residues). In terms of domain architecture, Helicase ATP-binding spans 486 to 654 (ALLHKHKVNM…MSLLNFVMPH (169 aa)). 499–506 (DEMGLGKT) contributes to the ATP binding site. Positions 605–608 (DEGH) match the DEGH box motif. In terms of domain architecture, Helicase C-terminal spans 835 to 997 (ILEKLLSDIK…TIPLDMATLL (163 aa)).

The protein belongs to the SNF2/RAD54 helicase family.

It localises to the nucleus. It is found in the chromosome. It catalyses the reaction ATP + H2O = ADP + phosphate + H(+). Functionally, DNA helicase that possesses intrinsic ATP-dependent nucleosome-remodeling activity and is both required for DNA repair and heterochromatin organization. Promotes DNA end resection of double-strand breaks (DSBs) following DNA damage: probably acts by weakening histone DNA interactions in nucleosomes flanking DSBs. Required for the restoration of heterochromatin organization after replication. The protein is SWI/SNF-related matrix-associated actin-dependent regulator of chromatin subfamily A containing DEAD/H box 1 (smarcad1) of Xenopus tropicalis (Western clawed frog).